The sequence spans 1169 residues: Flocculation protein FLO10 (1169 aa).

A signal peptide spans 1-24 (MPVAARYIFLTGLFLLSVANVALG). The PA14 domain occupies 111-271 (PVKRGVKLCS…GTEVNDDFEG (161 aa)). N-linked (GlcNAc...) asparagine glycosylation is found at Asn122, Asn157, and Asn279. Tandem repeats lie at residues 303–326 (SSWS…VTPY), 330–356 (SSWS…YVTS), 357–383 (SSSS…YVSS), 384–419 (STAA…YVTS), 420–446 (SSWS…YVSS), 447–482 (STAA…YVTS), 483–509 (SSSS…YVSS), 510–545 (STAA…YVTS), 546–572 (SSWS…YVSS), and 573–608 (STAA…YATS). The 6 X 27 AA approximate repeats, Ser/Thr-rich stretch occupies residues 303-572 (SSWSSSEVCT…TSYVTPYVSS (270 aa)). The segment at 384 to 608 (STAAANYTSS…TSTSTPYATS (225 aa)) is 4 X 36 AA approximate repeats, Ser/Thr-rich. Asn389 is a glycosylation site (N-linked (GlcNAc...) asparagine). Asn452 carries an N-linked (GlcNAc...) asparagine glycan. Residue Asn515 is glycosylated (N-linked (GlcNAc...) asparagine). N-linked (GlcNAc...) asparagine glycosylation is found at Asn578, Asn656, and Asn686. Over residues 798–819 (TKVSSSESSESHRTSPTTSSES) the composition is skewed to low complexity. Disordered regions lie at residues 798-837 (TKVS…SSFS), 856-920 (TPSS…SRDR), and 1070-1107 (RNNN…EAVS). Over residues 856–884 (TPSSPISTVAPRSTGLNSQTESTNSSKET) the composition is skewed to polar residues. Asn879 carries N-linked (GlcNAc...) asparagine glycosylation. The span at 886–902 (SSENSASVMPSSSATSP) shows a compositional bias: low complexity. Over residues 906–916 (KVTSDETSSGF) the composition is skewed to polar residues. Over residues 1077–1107 (TSGTTSIETHTTTTSNASENSDNVSASEAVS) the composition is skewed to low complexity. N-linked (GlcNAc...) asparagine glycans are attached at residues Asn1092 and Asn1099. Residue Gly1146 is the site of GPI-anchor amidated glycine attachment. The propeptide at 1147-1169 (IANHLLTNSGISIFIASLLLAIV) is removed in mature form.

It belongs to the flocculin family. Extensively O-glycosylated. Post-translationally, the GPI-anchor is attached to the protein in the endoplasmic reticulum and serves to target the protein to the cell surface. There, the glucosamine-inositol phospholipid moiety is cleaved off and the GPI-modified mannoprotein is covalently attached via its lipidless GPI glycan remnant to the 1,6-beta-glucan of the outer cell wall layer.

Its subcellular location is the secreted. It localises to the cell wall. The protein resides in the membrane. In terms of biological role, cell wall protein that participates directly in adhesive cell-cell interactions during yeast flocculation, a reversible, asexual and Ca(2+)-dependent process in which cells adhere to form aggregates (flocs) consisting of thousands of cells. The lectin-like protein sticks out of the cell wall of flocculent cells and selectively binds mannose residues in the cell walls of adjacent cells. Activity is inhibited by mannose, glucose, maltose and sucrose. Also involved in cell-substrate adhesion, haploid invasive growth and diploid pseudohyphae formation. The protein is Flocculation protein FLO10 (FLO10) of Saccharomyces cerevisiae (strain ATCC 204508 / S288c) (Baker's yeast).